The sequence spans 213 residues: MKAFTKITAIVAPLDRSNVDTDAIIPKQFLKSIKRSGFGPNAFDEWRYLDHGEPGMDNSKRPLNPDFSLNQPRYQGAQILLTRKNFGCGSSREHAPWALDDYGFRAVIAPSFADIFFNNCYKNGLLPIVLTEEQVDRLFKEVEANEGYQLSIDLAEQTLTTPGGETFTFDITEHRKHCLLNGLDEIGLTLQHADEIHAFEEKRRQSQPWLFNG.

It belongs to the LeuD family. LeuD type 1 subfamily. Heterodimer of LeuC and LeuD.

The catalysed reaction is (2R,3S)-3-isopropylmalate = (2S)-2-isopropylmalate. The protein operates within amino-acid biosynthesis; L-leucine biosynthesis; L-leucine from 3-methyl-2-oxobutanoate: step 2/4. Functionally, catalyzes the isomerization between 2-isopropylmalate and 3-isopropylmalate, via the formation of 2-isopropylmaleate. In Neisseria meningitidis serogroup C / serotype 2a (strain ATCC 700532 / DSM 15464 / FAM18), this protein is 3-isopropylmalate dehydratase small subunit.